Reading from the N-terminus, the 795-residue chain is MNELFQTPQVEAGIKEYPLMPLRDIVIFPTMVQPLFVGRRFSIRAIEEANKKDKLIFLVLQKDKDVEEPKEEDIYKVGVVAYILRTVPIEDARVKVLVQGLKRGVIKKLEWKEDHYVAQVDVIEERDIPPESQTIEDKALIKAVKESIDKLVSLGKQIIPDLVVLIKELEEPGKLADMVASILDIKSSQAQEILETFDPRERLKKVYKFLQDEIGLLEVKQRISEIARERMEKEQREYYLRQQLKAIQEELGEAGGIKAEIEEYTKKFEEVKECMPEEGVKEVEKNIKRLERLHPESAEAGVIRTWLDWVLDLPWCTRTEDNYDLERAREILDRDHYDLEKVKDRIIEYLAIRKLTQGKEAPTQILAFVGPPGVGKTSLGRSIAEALGRKFVRIALGGIRDEAEIRGHRRTYVGAMPGRIIQAIKQAGTKNPVIMLDEIDKLAISFQGDPAAALLEVLDPEQNKKFTDLYIGIPFDLSEVIFICTGNRADTIPTPLLDRMELIMLSGYSEEEKLFIAKKHLIPKLIPLHGFSPEEIEFTDEAILEIIRGYTREAGVRNLQRQISAVLRKIAVKKLQGEKGPFNITPELVRKLLGVPRYRPEREKKPLVGVATGLAWTEVGGEIMFIEATKMKGKGSLVLTGSLGDIMKESAQAALSYIRSKAEDYGIDPDIFSQVDVHVHVPEGAVPKDGPSAGVAIATALLSLFTDIPVRMDVAMTGEITLRGRVLPVGGLKEKILAAKRAEIYEVILPAKNKDEVMEELPEYVREKMTLHFVDNLEEVFKIALVREPKPLKEA.

The region spanning 17-214 (YPLMPLRDIV…KVYKFLQDEI (198 aa)) is the Lon N-terminal domain. Residue 370–377 (GPPGVGKT) coordinates ATP. Residues 605–787 (KPLVGVATGL…EEVFKIALVR (183 aa)) form the Lon proteolytic domain. Active-site residues include Ser692 and Lys735.

The protein belongs to the peptidase S16 family. In terms of assembly, homohexamer. Organized in a ring with a central cavity.

The protein resides in the cytoplasm. The catalysed reaction is Hydrolysis of proteins in presence of ATP.. In terms of biological role, ATP-dependent serine protease that mediates the selective degradation of mutant and abnormal proteins as well as certain short-lived regulatory proteins. Required for cellular homeostasis and for survival from DNA damage and developmental changes induced by stress. Degrades polypeptides processively to yield small peptide fragments that are 5 to 10 amino acids long. Binds to DNA in a double-stranded, site-specific manner. This chain is Lon protease, found in Aquifex aeolicus (strain VF5).